Reading from the N-terminus, the 661-residue chain is Lateral signaling target protein 2 (661 aa).

Positions Val294–Gln432 are disordered. Positions Asp297 to Asn310 are enriched in polar residues. Low complexity-rich tracts occupy residues Ser330–Ser360 and Thr381–Pro393. Residues Glu394–Glu411 show a composition bias toward acidic residues. Residues Val412 to Glu422 are compositionally biased toward basic and acidic residues. An FYVE-type zinc finger spans residues Asp566–Leu626. Zn(2+) is bound by residues Cys572, Cys575, Cys588, Cys591, Cys596, Cys599, Cys618, and Cys621. Over residues Asn641–Glu650 the composition is skewed to polar residues. The segment at Asn641 to Ser661 is disordered. Positions Gln651–Ser661 are enriched in low complexity.

Belongs to the lst-2 family. As to expression, expressed in vulval precursor cells (VPCs).

In terms of biological role, negative regulator of epidermal growth factor receptor (EGFR) signaling. This is Lateral signaling target protein 2 (lst-2) from Caenorhabditis elegans.